The chain runs to 307 residues: Ornithine carbamoyltransferase (307 aa).

Residues 50–53 (STRT), Gln-77, Arg-101, and 128–131 (HPCQ) contribute to the carbamoyl phosphate site. L-ornithine-binding positions include Asn-160, Asp-224, and 228–229 (SM). Residues 264 to 265 (CL) and Arg-292 contribute to the carbamoyl phosphate site.

The protein belongs to the aspartate/ornithine carbamoyltransferase superfamily. OTCase family.

The protein resides in the cytoplasm. The catalysed reaction is carbamoyl phosphate + L-ornithine = L-citrulline + phosphate + H(+). The protein operates within amino-acid biosynthesis; L-arginine biosynthesis; L-arginine from L-ornithine and carbamoyl phosphate: step 1/3. Its activity is regulated as follows. Inhibited by arginine, norvaline. Functionally, reversibly catalyzes the transfer of the carbamoyl group from carbamoyl phosphate (CP) to the N(epsilon) atom of ornithine (ORN) to produce L-citrulline, which is a substrate for argininosuccinate synthetase, the enzyme involved in the final step in arginine biosynthesis. This is Ornithine carbamoyltransferase from Mycolicibacterium smegmatis (strain ATCC 700084 / mc(2)155) (Mycobacterium smegmatis).